Here is a 243-residue protein sequence, read N- to C-terminus: Ubiquinone/menaquinone biosynthesis C-methyltransferase UbiE (243 aa).

S-adenosyl-L-methionine is bound by residues threonine 69, aspartate 90, and aspartate 116–alanine 117.

Belongs to the class I-like SAM-binding methyltransferase superfamily. MenG/UbiE family.

It carries out the reaction a 2-demethylmenaquinol + S-adenosyl-L-methionine = a menaquinol + S-adenosyl-L-homocysteine + H(+). The catalysed reaction is a 2-methoxy-6-(all-trans-polyprenyl)benzene-1,4-diol + S-adenosyl-L-methionine = a 5-methoxy-2-methyl-3-(all-trans-polyprenyl)benzene-1,4-diol + S-adenosyl-L-homocysteine + H(+). Its pathway is quinol/quinone metabolism; menaquinone biosynthesis; menaquinol from 1,4-dihydroxy-2-naphthoate: step 2/2. The protein operates within cofactor biosynthesis; ubiquinone biosynthesis. Methyltransferase required for the conversion of demethylmenaquinol (DMKH2) to menaquinol (MKH2) and the conversion of 2-polyprenyl-6-methoxy-1,4-benzoquinol (DDMQH2) to 2-polyprenyl-3-methyl-6-methoxy-1,4-benzoquinol (DMQH2). The protein is Ubiquinone/menaquinone biosynthesis C-methyltransferase UbiE of Ralstonia nicotianae (strain ATCC BAA-1114 / GMI1000) (Ralstonia solanacearum).